The primary structure comprises 800 residues: Nucleolar complex protein 3 homolog (800 aa).

2 stretches are compositionally biased toward basic residues: residues 1–19 (MGPA…RKLL) and 42–53 (KKQRKEQRKLHK). Disordered stretches follow at residues 1 to 91 (MGPA…TDMM) and 167 to 197 (KPVL…SAPL). Residues 65–74 (PLERYKKRPE) are compositionally biased toward basic and acidic residues. The stretch at 449-490 (SFKEKRKNLSRMQRKWKKAEEKLQKELLEAEATESKEKKIKL) forms a coiled coil. Residues 780 to 800 (LQEEPEQMSLDFTSPHTQQEP) are disordered. A compositionally biased stretch (polar residues) spans 789–800 (LDFTSPHTQQEP).

Belongs to the CBF/MAK21 family.

It localises to the nucleus. Its subcellular location is the nucleolus. In Danio rerio (Zebrafish), this protein is Nucleolar complex protein 3 homolog (noc3l).